The chain runs to 427 residues: Glutamyl-tRNA reductase (427 aa).

Residues threonine 48 to arginine 51, serine 99, glutamate 104 to glutamine 106, and glutamine 110 contribute to the substrate site. Cysteine 49 acts as the Nucleophile in catalysis. NADP(+) is bound at residue glycine 179 to glycine 184.

Belongs to the glutamyl-tRNA reductase family. Homodimer.

The catalysed reaction is (S)-4-amino-5-oxopentanoate + tRNA(Glu) + NADP(+) = L-glutamyl-tRNA(Glu) + NADPH + H(+). It functions in the pathway porphyrin-containing compound metabolism; protoporphyrin-IX biosynthesis; 5-aminolevulinate from L-glutamyl-tRNA(Glu): step 1/2. Functionally, catalyzes the NADPH-dependent reduction of glutamyl-tRNA(Glu) to glutamate 1-semialdehyde (GSA). This Methanocella arvoryzae (strain DSM 22066 / NBRC 105507 / MRE50) protein is Glutamyl-tRNA reductase.